The chain runs to 271 residues: Formamidopyrimidine-DNA glycosylase (271 aa).

The active-site Schiff-base intermediate with DNA is the P2. The Proton donor role is filled by E3. K57 serves as the catalytic Proton donor; for beta-elimination activity. The DNA site is built by H90, R109, and K150. The FPG-type zinc-finger motif lies at 235–269; it reads LVYGNKDKPCPKCGGKIESLIIGQRNSFFCPKCQK. R259 functions as the Proton donor; for delta-elimination activity in the catalytic mechanism.

Belongs to the FPG family. In terms of assembly, monomer. Requires Zn(2+) as cofactor.

The enzyme catalyses Hydrolysis of DNA containing ring-opened 7-methylguanine residues, releasing 2,6-diamino-4-hydroxy-5-(N-methyl)formamidopyrimidine.. It catalyses the reaction 2'-deoxyribonucleotide-(2'-deoxyribose 5'-phosphate)-2'-deoxyribonucleotide-DNA = a 3'-end 2'-deoxyribonucleotide-(2,3-dehydro-2,3-deoxyribose 5'-phosphate)-DNA + a 5'-end 5'-phospho-2'-deoxyribonucleoside-DNA + H(+). Functionally, involved in base excision repair of DNA damaged by oxidation or by mutagenic agents. Acts as a DNA glycosylase that recognizes and removes damaged bases. Has a preference for oxidized purines, such as 7,8-dihydro-8-oxoguanine (8-oxoG). Has AP (apurinic/apyrimidinic) lyase activity and introduces nicks in the DNA strand. Cleaves the DNA backbone by beta-delta elimination to generate a single-strand break at the site of the removed base with both 3'- and 5'-phosphates. The chain is Formamidopyrimidine-DNA glycosylase from Haemophilus influenzae (strain PittEE).